Consider the following 279-residue polypeptide: Large ribosomal subunit protein uL2 (279 aa).

2 disordered regions span residues 1–59 (MGIR…GGHK) and 224–279 (VAMN…KNKR). Basic residues-rich tracts occupy residues 50–59 (TTRHKGGGHK) and 269–279 (VRRRRTGKNKR).

It belongs to the universal ribosomal protein uL2 family. Part of the 50S ribosomal subunit. Forms a bridge to the 30S subunit in the 70S ribosome.

Functionally, one of the primary rRNA binding proteins. Required for association of the 30S and 50S subunits to form the 70S ribosome, for tRNA binding and peptide bond formation. It has been suggested to have peptidyltransferase activity; this is somewhat controversial. Makes several contacts with the 16S rRNA in the 70S ribosome. In Arthrobacter sp. (strain FB24), this protein is Large ribosomal subunit protein uL2.